Here is a 312-residue protein sequence, read N- to C-terminus: Malate dehydrogenase (312 aa).

NAD(+) is bound by residues 7–13 and Asp34; that span reads GAAGGIG. Residues Arg81 and Arg87 each coordinate substrate. Residues Asn94 and 117–119 each bind NAD(+); that span reads ITN. Asn119 and Arg153 together coordinate substrate. His177 acts as the Proton acceptor in catalysis. Residue Met227 participates in NAD(+) binding.

It belongs to the LDH/MDH superfamily. MDH type 1 family. Homodimer.

The enzyme catalyses (S)-malate + NAD(+) = oxaloacetate + NADH + H(+). Functionally, catalyzes the reversible oxidation of malate to oxaloacetate. In Escherichia coli O139:H28 (strain E24377A / ETEC), this protein is Malate dehydrogenase.